The primary structure comprises 249 residues: 5'-nucleotidase SurE (249 aa).

Asp9, Asp10, Ser40, and Asn92 together coordinate a divalent metal cation.

Belongs to the SurE nucleotidase family. A divalent metal cation serves as cofactor.

Its subcellular location is the cytoplasm. It catalyses the reaction a ribonucleoside 5'-phosphate + H2O = a ribonucleoside + phosphate. Its function is as follows. Nucleotidase that shows phosphatase activity on nucleoside 5'-monophosphates. The polypeptide is 5'-nucleotidase SurE (Shewanella baltica (strain OS195)).